The following is a 260-amino-acid chain: UPF0294 protein YE0917 (260 aa).

Belongs to the UPF0294 family.

It localises to the cytoplasm. The protein is UPF0294 protein YE0917 of Yersinia enterocolitica serotype O:8 / biotype 1B (strain NCTC 13174 / 8081).